The chain runs to 152 residues: Protein-export protein SecB (152 aa).

It belongs to the SecB family. As to quaternary structure, homotetramer, a dimer of dimers. One homotetramer interacts with 1 SecA dimer.

The protein localises to the cytoplasm. Functionally, one of the proteins required for the normal export of preproteins out of the cell cytoplasm. It is a molecular chaperone that binds to a subset of precursor proteins, maintaining them in a translocation-competent state. It also specifically binds to its receptor SecA. This Rickettsia peacockii (strain Rustic) protein is Protein-export protein SecB.